Here is a 550-residue protein sequence, read N- to C-terminus: Calcium-dependent protein kinase 20 (550 aa).

The disordered stretch occupies residues 1 to 58; sequence MGNCCVTPEGSGRGRKKQQQEQKQKQKEPKQQQQQQKKGKKPNPFSIEYNRSSAPSGH. Glycine 2 is lipidated: N-myristoyl glycine. The span at 18–30 shows a compositional bias: basic and acidic residues; sequence QQQEQKQKQKEPK. The region spanning 75 to 333 is the Protein kinase domain; it reads YELGGELGRG…AQQVLDHPWL (259 aa). ATP-binding positions include 81 to 89 and lysine 104; that span reads LGRGEFGVT. The active-site Proton acceptor is aspartate 199. An autoinhibitory domain region spans residues 339–369; the sequence is APNVNLGETVKARLQQFSVMNKFKKHALRVI. EF-hand domains are found at residues 376 to 411, 412 to 447, 448 to 483, and 484 to 519; these read EEVAGIKDMFEKMDLNKDNMINFDELKLGLHKLGHQ, MADADVQILMDAADVDGNGSLDYGEFVALSVHLRKI, GNDEHLHKAFAYFDRNQSGYIEIDELRESLADDLGA, and NHEEVINAIIRDVDTDKDGKISYDEFAAMMKAGTDW. Ca(2+) is bound by residues aspartate 389, asparagine 391, aspartate 393, methionine 395, glutamate 400, aspartate 425, aspartate 427, asparagine 429, serine 431, glutamate 436, aspartate 461, asparagine 463, serine 465, tyrosine 467, glutamate 472, aspartate 497, aspartate 499, aspartate 501, lysine 503, and glutamate 508.

It belongs to the protein kinase superfamily. Ser/Thr protein kinase family. CDPK subfamily. In terms of tissue distribution, expressed in roots and leaf blades.

The protein resides in the membrane. The enzyme catalyses L-seryl-[protein] + ATP = O-phospho-L-seryl-[protein] + ADP + H(+). It carries out the reaction L-threonyl-[protein] + ATP = O-phospho-L-threonyl-[protein] + ADP + H(+). Its activity is regulated as follows. Activated by calcium. Autophosphorylation may play an important role in the regulation of the kinase activity. May play a role in signal transduction pathways that involve calcium as a second messenger. This chain is Calcium-dependent protein kinase 20, found in Oryza sativa subsp. japonica (Rice).